A 482-amino-acid chain; its full sequence is Altronate oxidoreductase (482 aa).

18–29 (IIQFGEGNFLRA) contributes to the NAD(+) binding site.

This sequence belongs to the mannitol dehydrogenase family. UxaB subfamily.

The enzyme catalyses D-altronate + NAD(+) = keto-D-tagaturonate + NADH + H(+). Its pathway is carbohydrate metabolism; pentose and glucuronate interconversion. This Shigella sonnei (strain Ss046) protein is Altronate oxidoreductase.